We begin with the raw amino-acid sequence, 314 residues long: Ferrochelatase (314 aa).

Positions 184 and 259 each coordinate Fe cation.

This sequence belongs to the ferrochelatase family.

The protein localises to the cytoplasm. It catalyses the reaction heme b + 2 H(+) = protoporphyrin IX + Fe(2+). The protein operates within porphyrin-containing compound metabolism; protoheme biosynthesis; protoheme from protoporphyrin-IX: step 1/1. Functionally, catalyzes the ferrous insertion into protoporphyrin IX. This chain is Ferrochelatase, found in Chlamydia trachomatis serovar L2 (strain ATCC VR-902B / DSM 19102 / 434/Bu).